Consider the following 422-residue polypeptide: MEFPEHGGRLLGRLRQQRELGFLCDCTVLVGDARFPAHRAVLAACSVYFHLFYRDRPAGSRDTVRLNGDIVTAPAFGRLLDFMYEGRLDLRSLPVEDVLAAASYLHMYDIVKVCKGRLQEKDRSLDPGNPAPGAEPAQPPCPWPVWTADLCPAARKAKLPPFGVKAALPPRASGPPPCQVPEESDQALDLSLKSGPRQERVHPPCVLQTPLCSQRQPGAQPLVKDERDSLSEQEESSSSRSPHSPPKPPPVPAAKGLVVGLQPLPLSGEGSRELELGAGRLASEDELGPGGPLCICPLCSKLFPSSHVLQLHLSAHFRERDSTRARLSPDGVAPTCPLCGKTFSCTYTLKRHERTHSGEKPYTCVQCGKSFQYSHNLSRHTVVHTREKPHACRWCERRFTQSGDLYRHVRKFHCGLVKSLLV.

One can recognise a BTB domain in the interval Cys-24–Ser-92. Disordered stretches follow at residues Lys-121–Cys-141, Ala-166–Leu-188, and Leu-207–Gly-256. The segment covering His-243 to Pro-252 has biased composition (pro residues). 4 consecutive C2H2-type zinc fingers follow at residues Cys-294–His-316, Pro-334–His-356, Tyr-362–His-384, and His-390–His-413.

Belongs to the krueppel C2H2-type zinc-finger protein family. ZBTB18 subfamily. Expressed in skeletal muscle (at protein level).

The protein localises to the cytoplasm. It localises to the nucleus. It is found in the nucleoplasm. Its function is as follows. Transcriptional repressor. Specifically binds DNA and probably acts by recruiting chromatin remodeling multiprotein complexes. This is Zinc finger and BTB domain-containing protein 42 (ZBTB42) from Homo sapiens (Human).